Consider the following 235-residue polypeptide: Protein Thf1 (235 aa).

A coiled-coil region spans residues 179 to 228 (LNLSSDKLQKDLDLYRSNVDKMGQLLAVIEDALEAERKKREKAKQEVATT).

Belongs to the THF1 family.

Its function is as follows. May be involved in photosynthetic membrane biogenesis. This is Protein Thf1 from Rippkaea orientalis (strain PCC 8801 / RF-1) (Cyanothece sp. (strain PCC 8801)).